A 420-amino-acid chain; its full sequence is Succinate--CoA ligase [GDP-forming] subunit beta, mitochondrial (420 aa).

The ATP-grasp domain maps to 35 to 263 (KSLMDKYGVN…NASFRQKEIF (229 aa)). GTP contacts are provided by residues Gln-46, 78 to 80 (GRG), and Val-135. Mg(2+)-binding residues include Asn-232 and Asp-246. Substrate is bound by residues Asn-297 and 354 to 356 (GIM).

It belongs to the succinate/malate CoA ligase beta subunit family. GTP-specific subunit beta subfamily. Heterodimer of an alpha and a beta subunit. The beta subunit determines specificity for GTP. It depends on Mg(2+) as a cofactor.

It is found in the mitochondrion. The enzyme catalyses GTP + succinate + CoA = succinyl-CoA + GDP + phosphate. Its pathway is carbohydrate metabolism; tricarboxylic acid cycle; succinate from succinyl-CoA (ligase route): step 1/1. Its function is as follows. GTP-specific succinyl-CoA synthetase functions in the citric acid cycle (TCA), coupling the hydrolysis of succinyl-CoA to the synthesis of GTP and thus represents the only step of substrate-level phosphorylation in the TCA. The beta subunit provides nucleotide specificity of the enzyme and binds the substrate succinate, while the binding sites for coenzyme A and phosphate are found in the alpha subunit. The protein is Succinate--CoA ligase [GDP-forming] subunit beta, mitochondrial (scsB) of Dictyostelium discoideum (Social amoeba).